We begin with the raw amino-acid sequence, 192 residues long: Lumican (192 aa).

9 LRR repeats span residues 1-23, 26-46, 47-68, 69-90, 94-114, 115-136, 139-162, 164-185, and 186-192; these read LQWL…VFSK, QLKK…PLPK, SLED…DGLL, NLTF…AAFK, SLEY…GLPA, SLLT…YFKR, GLQY…SFNI, SLVE…NENL, and ENYYLEV.

This sequence belongs to the small leucine-rich proteoglycan (SLRP) family. SLRP class II subfamily. As to quaternary structure, binds to laminin. Post-translationally, sulfated on tyrosine residue(s). In terms of processing, contains keratan sulfate.

The protein localises to the secreted. Its subcellular location is the extracellular space. It is found in the extracellular matrix. In Oryctolagus cuniculus (Rabbit), this protein is Lumican (LUM).